We begin with the raw amino-acid sequence, 181 residues long: Oligoribonuclease (181 aa).

The region spanning 8-171 is the Exonuclease domain; that stretch reads LIWIDLEMTG…DDIRESVAEL (164 aa). Tyrosine 129 is an active-site residue.

It belongs to the oligoribonuclease family.

The protein localises to the cytoplasm. 3'-to-5' exoribonuclease specific for small oligoribonucleotides. This is Oligoribonuclease from Yersinia enterocolitica serotype O:8 / biotype 1B (strain NCTC 13174 / 8081).